Consider the following 76-residue polypeptide: Acyl carrier protein (76 aa).

Positions 1–76 (MATFDDVKDV…AAIDYIESKQ (76 aa)) constitute a Carrier domain. The residue at position 36 (S36) is an O-(pantetheine 4'-phosphoryl)serine.

This sequence belongs to the acyl carrier protein (ACP) family. In terms of processing, 4'-phosphopantetheine is transferred from CoA to a specific serine of apo-ACP by AcpS. This modification is essential for activity because fatty acids are bound in thioester linkage to the sulfhydryl of the prosthetic group.

It localises to the cytoplasm. It participates in lipid metabolism; fatty acid biosynthesis. In terms of biological role, carrier of the growing fatty acid chain in fatty acid biosynthesis. In Deinococcus deserti (strain DSM 17065 / CIP 109153 / LMG 22923 / VCD115), this protein is Acyl carrier protein.